A 249-amino-acid chain; its full sequence is Type III pantothenate kinase (249 aa).

6-13 is a binding site for ATP; the sequence is DCGNSFIK. Residues Y93 and 100–103 contribute to the substrate site; that span reads GLDR. D102 serves as the catalytic Proton acceptor. A K(+)-binding site is contributed by D122. T125 is a binding site for ATP. T181 contacts substrate.

This sequence belongs to the type III pantothenate kinase family. Homodimer. NH4(+) is required as a cofactor. Requires K(+) as cofactor.

The protein resides in the cytoplasm. The enzyme catalyses (R)-pantothenate + ATP = (R)-4'-phosphopantothenate + ADP + H(+). It participates in cofactor biosynthesis; coenzyme A biosynthesis; CoA from (R)-pantothenate: step 1/5. Catalyzes the phosphorylation of pantothenate (Pan), the first step in CoA biosynthesis. This chain is Type III pantothenate kinase, found in Pseudomonas fluorescens (strain SBW25).